The primary structure comprises 201 residues: FMN-dependent NADH:quinone oxidoreductase (201 aa).

FMN-binding positions include Ser-9 and 16–18; that span reads SYS.

The protein belongs to the azoreductase type 1 family. Homodimer. Requires FMN as cofactor.

It carries out the reaction 2 a quinone + NADH + H(+) = 2 a 1,4-benzosemiquinone + NAD(+). The enzyme catalyses N,N-dimethyl-1,4-phenylenediamine + anthranilate + 2 NAD(+) = 2-(4-dimethylaminophenyl)diazenylbenzoate + 2 NADH + 2 H(+). Its function is as follows. Quinone reductase that provides resistance to thiol-specific stress caused by electrophilic quinones. In terms of biological role, also exhibits azoreductase activity. Catalyzes the reductive cleavage of the azo bond in aromatic azo compounds to the corresponding amines. The protein is FMN-dependent NADH:quinone oxidoreductase of Mesomycoplasma hyopneumoniae (strain 232) (Mycoplasma hyopneumoniae).